The following is a 625-amino-acid chain: Chaperone protein HtpG (625 aa).

The a; substrate-binding stretch occupies residues methionine 1–arginine 341. A b region spans residues glutamate 342–lysine 551. The c stretch occupies residues valine 552–alanine 625.

Belongs to the heat shock protein 90 family. As to quaternary structure, homodimer.

The protein localises to the cytoplasm. Molecular chaperone. Has ATPase activity. The sequence is that of Chaperone protein HtpG from Halalkalibacterium halodurans (strain ATCC BAA-125 / DSM 18197 / FERM 7344 / JCM 9153 / C-125) (Bacillus halodurans).